Here is a 207-residue protein sequence, read N- to C-terminus: ATP synthase subunit b 2 (207 aa).

The span at 1 to 31 (MVAQAAPPAGTAGQGTHEAASAAHGAAAAHG) shows a compositional bias: low complexity. The disordered stretch occupies residues 1-41 (MVAQAAPPAGTAGQGTHEAASAAHGAAAAHGAAEEGHGKKS). Residues 48–70 (ATTFASQLLWLVLSFGLLYLLMS) form a helical membrane-spanning segment.

It belongs to the ATPase B chain family. In terms of assembly, F-type ATPases have 2 components, F(1) - the catalytic core - and F(0) - the membrane proton channel. F(1) has five subunits: alpha(3), beta(3), gamma(1), delta(1), epsilon(1). F(0) has three main subunits: a(1), b(2) and c(10-14). The alpha and beta chains form an alternating ring which encloses part of the gamma chain. F(1) is attached to F(0) by a central stalk formed by the gamma and epsilon chains, while a peripheral stalk is formed by the delta and b chains.

The protein localises to the cell inner membrane. Functionally, f(1)F(0) ATP synthase produces ATP from ADP in the presence of a proton or sodium gradient. F-type ATPases consist of two structural domains, F(1) containing the extramembraneous catalytic core and F(0) containing the membrane proton channel, linked together by a central stalk and a peripheral stalk. During catalysis, ATP synthesis in the catalytic domain of F(1) is coupled via a rotary mechanism of the central stalk subunits to proton translocation. Its function is as follows. Component of the F(0) channel, it forms part of the peripheral stalk, linking F(1) to F(0). The sequence is that of ATP synthase subunit b 2 from Xanthobacter autotrophicus (strain ATCC BAA-1158 / Py2).